Here is a 658-residue protein sequence, read N- to C-terminus: Threonine--tRNA ligase (658 aa).

Positions 1–61 constitute a TGS domain; sequence MSDVRVIIQR…RDGESVEPVE (61 aa). The tract at residues 259 to 554 is catalytic; the sequence is DHRKLGNELD…LLEHYAGAFP (296 aa). The Zn(2+) site is built by cysteine 353, histidine 404, and histidine 531.

This sequence belongs to the class-II aminoacyl-tRNA synthetase family. As to quaternary structure, homodimer. It depends on Zn(2+) as a cofactor.

It localises to the cytoplasm. It catalyses the reaction tRNA(Thr) + L-threonine + ATP = L-threonyl-tRNA(Thr) + AMP + diphosphate + H(+). Its function is as follows. Catalyzes the attachment of threonine to tRNA(Thr) in a two-step reaction: L-threonine is first activated by ATP to form Thr-AMP and then transferred to the acceptor end of tRNA(Thr). Also edits incorrectly charged L-seryl-tRNA(Thr). This chain is Threonine--tRNA ligase, found in Streptomyces griseus subsp. griseus (strain JCM 4626 / CBS 651.72 / NBRC 13350 / KCC S-0626 / ISP 5235).